The primary structure comprises 208 residues: Na(+)-translocating NADH-quinone reductase subunit D (208 aa).

5 consecutive transmembrane segments (helical) span residues 42-62 (IVMT…ISLI), 70-90 (VRII…DQIL), 103-123 (VFVG…AFAM), 131-151 (FVDG…VAFI), and 178-198 (NGLF…IWGI).

The protein belongs to the NqrDE/RnfAE family. As to quaternary structure, composed of six subunits; NqrA, NqrB, NqrC, NqrD, NqrE and NqrF.

The protein resides in the cell inner membrane. The enzyme catalyses a ubiquinone + n Na(+)(in) + NADH + H(+) = a ubiquinol + n Na(+)(out) + NAD(+). Functionally, NQR complex catalyzes the reduction of ubiquinone-1 to ubiquinol by two successive reactions, coupled with the transport of Na(+) ions from the cytoplasm to the periplasm. NqrA to NqrE are probably involved in the second step, the conversion of ubisemiquinone to ubiquinol. This chain is Na(+)-translocating NADH-quinone reductase subunit D, found in Pasteurella multocida (strain Pm70).